A 304-amino-acid polypeptide reads, in one-letter code: Aspartate carbamoyltransferase catalytic subunit (304 aa).

2 residues coordinate carbamoyl phosphate: Arg53 and Thr54. Lys82 is an L-aspartate binding site. Positions 103, 131, and 134 each coordinate carbamoyl phosphate. L-aspartate contacts are provided by Arg163 and Arg224. Residues Leu263 and Pro264 each coordinate carbamoyl phosphate.

It belongs to the aspartate/ornithine carbamoyltransferase superfamily. ATCase family. As to quaternary structure, heterooligomer of catalytic and regulatory chains.

It carries out the reaction carbamoyl phosphate + L-aspartate = N-carbamoyl-L-aspartate + phosphate + H(+). It participates in pyrimidine metabolism; UMP biosynthesis via de novo pathway; (S)-dihydroorotate from bicarbonate: step 2/3. Its function is as follows. Catalyzes the condensation of carbamoyl phosphate and aspartate to form carbamoyl aspartate and inorganic phosphate, the committed step in the de novo pyrimidine nucleotide biosynthesis pathway. The chain is Aspartate carbamoyltransferase catalytic subunit from Haloarcula marismortui (strain ATCC 43049 / DSM 3752 / JCM 8966 / VKM B-1809) (Halobacterium marismortui).